The following is a 236-amino-acid chain: MKIGIIGAMEPEVAHLIAAMTNASSQTIAGIEFIAGTLAGKDVVVTRSGIGKVAASIATTLLIEKYAPDAVINTGSAGGFVDSLSIGDIVISSEVRHHDVDVTAFGYEIGQMAQQPAAFIPAPYLVEAANKAIKQLGEVKAIEGLICTGDSFICDPVRTKTMLEHFPTMAACEMEGAAIAQVCHQFGMPFVVIRSLSDNANNDSPVDFDSYIVKAGYHSALMVMLLLEQLDPNSVK.

Glutamate 12 acts as the Proton acceptor in catalysis. Residues glycine 78, isoleucine 153, and 174–175 each bind substrate; that span reads ME. Catalysis depends on aspartate 198, which acts as the Proton donor.

It belongs to the PNP/UDP phosphorylase family. MtnN subfamily.

The catalysed reaction is S-adenosyl-L-homocysteine + H2O = S-(5-deoxy-D-ribos-5-yl)-L-homocysteine + adenine. The enzyme catalyses S-methyl-5'-thioadenosine + H2O = 5-(methylsulfanyl)-D-ribose + adenine. It carries out the reaction 5'-deoxyadenosine + H2O = 5-deoxy-D-ribose + adenine. The protein operates within amino-acid biosynthesis; L-methionine biosynthesis via salvage pathway; S-methyl-5-thio-alpha-D-ribose 1-phosphate from S-methyl-5'-thioadenosine (hydrolase route): step 1/2. In terms of biological role, catalyzes the irreversible cleavage of the glycosidic bond in both 5'-methylthioadenosine (MTA) and S-adenosylhomocysteine (SAH/AdoHcy) to adenine and the corresponding thioribose, 5'-methylthioribose and S-ribosylhomocysteine, respectively. Also cleaves 5'-deoxyadenosine, a toxic by-product of radical S-adenosylmethionine (SAM) enzymes, into 5-deoxyribose and adenine. The sequence is that of 5'-methylthioadenosine/S-adenosylhomocysteine nucleosidase from Shewanella sp. (strain MR-7).